The chain runs to 209 residues: Peroxynitrite isomerase 2 (209 aa).

The GXWXGXG motif lies at 56-62 (GVWRGEG). Positions 172 and 199 each coordinate heme b.

The protein belongs to the nitrobindin family. As to quaternary structure, homodimer. The cofactor is heme b.

It carries out the reaction peroxynitrite = nitrate. It participates in nitrogen metabolism. In terms of biological role, heme-binding protein able to scavenge peroxynitrite and to protect free L-tyrosine against peroxynitrite-mediated nitration, by acting as a peroxynitrite isomerase that converts peroxynitrite to nitrate. Therefore, this protein likely plays a role in peroxynitrite sensing and in the detoxification of reactive nitrogen and oxygen species (RNS and ROS, respectively). Is able to bind nitric oxide (NO) in vitro, but may act as a sensor of peroxynitrite levels in vivo. This chain is Peroxynitrite isomerase 2, found in Mycolicibacterium vanbaalenii (strain DSM 7251 / JCM 13017 / BCRC 16820 / KCTC 9966 / NRRL B-24157 / PYR-1) (Mycobacterium vanbaalenii).